A 680-amino-acid chain; its full sequence is Lipase 1 (680 aa).

Positions 1–34 (MKSQNKYSIRKFSVGASSILIATLLFLSGGQAQA) are cleaved as a signal peptide. Residues 35–290 (AEKQVNMGNS…AKAKGDQTNK (256 aa)) constitute a propeptide that is removed on maturation. Disordered regions lie at residues 39–58 (VNMG…GDQQ) and 82–260 (KNLH…KNGL). A compositionally biased stretch (polar residues) spans 40–58 (NMGNSQEDTVTAQSIGDQQ). Residues 84 to 112 (LHNDKTISEENHRKTDDLNKDQLKDDKKS) show a composition bias toward basic and acidic residues. 2 stretches are compositionally biased toward polar residues: residues 162–193 (SQDL…SQRE) and 204–223 (QPQQ…FNNE). Positions 224–234 (QEVKPQKDEKT) are enriched in basic and acidic residues. Positions 235–246 (LSVSDLKNNQKS) are enriched in polar residues. Ser-408 serves as the catalytic Nucleophile. Asp-600 serves as the catalytic Charge relay system. Asp-638 is a Ca(2+) binding site. The Charge relay system role is filled by His-639. The Ca(2+) site is built by Asp-641, Asp-646, and Asp-649.

Belongs to the AB hydrolase superfamily. Lipase family.

The protein localises to the secreted. It catalyses the reaction a triacylglycerol + H2O = a diacylglycerol + a fatty acid + H(+). In Staphylococcus aureus (strain MRSA252), this protein is Lipase 1 (lip1).